A 372-amino-acid polypeptide reads, in one-letter code: Glutamate 5-kinase (372 aa).

Lys-14 lines the ATP pocket. 3 residues coordinate substrate: Ser-54, Asp-141, and Asn-153. 173–174 (TD) provides a ligand contact to ATP. A PUA domain is found at 280–358 (RGHVVIDAGA…GEIETVLGYM (79 aa)).

Belongs to the glutamate 5-kinase family.

It is found in the cytoplasm. It catalyses the reaction L-glutamate + ATP = L-glutamyl 5-phosphate + ADP. Its pathway is amino-acid biosynthesis; L-proline biosynthesis; L-glutamate 5-semialdehyde from L-glutamate: step 1/2. In terms of biological role, catalyzes the transfer of a phosphate group to glutamate to form L-glutamate 5-phosphate. The polypeptide is Glutamate 5-kinase (Burkholderia orbicola (strain AU 1054)).